The sequence spans 263 residues: MSSNFRHQLLSLSLLVGIAAPWAAFAQAPISSVGSGSVEDRVTQLERISNAHSQLLTQLQQQLSDNQSDIDSLRGQIQENQYQLNQVVERQKQILLQIDSLSSGGAAAQSTSGDQSGAAASTTPTADAGTANAGAPVKSGNANTDYNAAIALVQDKSRQDDAMVAFQNFIKNYPDSTYLPNANYWLGQLNYNKGKKDDAAYYFASVVKNYPKSPKAADAMFKVGVIMQDKGDTAKAKAVYQQVISKYPGTDGAKQAQKRLNAM.

An N-terminal signal peptide occupies residues 1–26; sequence MSSNFRHQLLSLSLLVGIAAPWAAFA. The stretch at 44-88 forms a coiled coil; sequence QLERISNAHSQLLTQLQQQLSDNQSDIDSLRGQIQENQYQLNQVV. Over residues 106–123 the composition is skewed to low complexity; that stretch reads AAAQSTSGDQSGAAASTT. The interval 106–139 is disordered; sequence AAAQSTSGDQSGAAASTTPTADAGTANAGAPVKS. TPR repeat units lie at residues 143-176, 180-213, and 217-250; these read NTDYNAAIALVQDKSRQDDAMVAFQNFIKNYPDS, PNANYWLGQLNYNKGKKDDAAYYFASVVKNYPKS, and ADAMFKVGVIMQDKGDTAKAKAVYQQVISKYPGT.

Belongs to the CpoB family. Homotrimer. Interacts directly with the central domain of TolA and with PBP1B. Binding to TolA disrupts the homotrimer to form a YbgF/TolA heterodimer with weak affinity. Forms a quaternary complex with PBP1B-LpoB and TolA.

It is found in the periplasm. In terms of biological role, mediates coordination of peptidoglycan synthesis and outer membrane constriction during cell division. Promotes physical and functional coordination of the PBP1B-LpoB and Tol machines, and regulates PBP1B activity in response to Tol energy state. The protein is Cell division coordinator CpoB of Escherichia coli (strain K12).